Reading from the N-terminus, the 286-residue chain is Spermidine/putrescine transport system permease protein PotB homolog (286 aa).

6 helical membrane passes run 10-30, 62-82, 94-114, 136-156, 193-213, and 248-268; these read AVPFFVLMVIFFVVPMAWIIV, LWTATVTVLVALLVAFPFCYF, FVIALATAPIWSSFLIKLIGL, FGSGYTLIGMIYLFTPFMFLP, TAILSGIALTFFPSLTSVAIA, and GAIIIAALITFAFYFVVIFAP. Residues 58 to 264 form the ABC transmembrane type-1 domain; sequence FWTSLWTATV…LITFAFYFVV (207 aa).

The protein belongs to the binding-protein-dependent transport system permease family. CysTW subfamily.

The protein localises to the cell membrane. Its function is as follows. Required for the activity of the bacterial transport system of putrescine and spermidine. The polypeptide is Spermidine/putrescine transport system permease protein PotB homolog (potB) (Mycoplasma pneumoniae (strain ATCC 29342 / M129 / Subtype 1) (Mycoplasmoides pneumoniae)).